A 465-amino-acid chain; its full sequence is UDP-N-acetylmuramate--L-alanine ligase (465 aa).

115–121 (GTHGKTT) contacts ATP.

It belongs to the MurCDEF family.

It localises to the cytoplasm. It catalyses the reaction UDP-N-acetyl-alpha-D-muramate + L-alanine + ATP = UDP-N-acetyl-alpha-D-muramoyl-L-alanine + ADP + phosphate + H(+). It functions in the pathway cell wall biogenesis; peptidoglycan biosynthesis. Cell wall formation. This is UDP-N-acetylmuramate--L-alanine ligase from Renibacterium salmoninarum (strain ATCC 33209 / DSM 20767 / JCM 11484 / NBRC 15589 / NCIMB 2235).